The chain runs to 207 residues: 2,3-bisphosphoglycerate-dependent phosphoglycerate mutase (207 aa).

Substrate-binding positions include 10-17 (RHGQSEWN), 23-24 (TG), R62, 89-92 (ERDY), K100, 116-117 (RR), and 160-161 (GN). H11 functions as the Tele-phosphohistidine intermediate in the catalytic mechanism. E89 functions as the Proton donor/acceptor in the catalytic mechanism.

Belongs to the phosphoglycerate mutase family. BPG-dependent PGAM subfamily. Homodimer.

It catalyses the reaction (2R)-2-phosphoglycerate = (2R)-3-phosphoglycerate. It functions in the pathway carbohydrate degradation; glycolysis; pyruvate from D-glyceraldehyde 3-phosphate: step 3/5. Its function is as follows. Catalyzes the interconversion of 2-phosphoglycerate and 3-phosphoglycerate. The protein is 2,3-bisphosphoglycerate-dependent phosphoglycerate mutase of Afipia carboxidovorans (strain ATCC 49405 / DSM 1227 / KCTC 32145 / OM5) (Oligotropha carboxidovorans).